The following is a 159-amino-acid chain: Putative 4-hydroxy-4-methyl-2-oxoglutarate aldolase (159 aa).

Substrate is bound by residues 75 to 78 (GDQL) and R97. D98 lines the a divalent metal cation pocket.

The protein belongs to the class II aldolase/RraA-like family. As to quaternary structure, homotrimer. A divalent metal cation serves as cofactor.

It catalyses the reaction 4-hydroxy-4-methyl-2-oxoglutarate = 2 pyruvate. The catalysed reaction is oxaloacetate + H(+) = pyruvate + CO2. Its function is as follows. Catalyzes the aldol cleavage of 4-hydroxy-4-methyl-2-oxoglutarate (HMG) into 2 molecules of pyruvate. Also contains a secondary oxaloacetate (OAA) decarboxylase activity due to the common pyruvate enolate transition state formed following C-C bond cleavage in the retro-aldol and decarboxylation reactions. The protein is Putative 4-hydroxy-4-methyl-2-oxoglutarate aldolase of Laribacter hongkongensis (strain HLHK9).